We begin with the raw amino-acid sequence, 156 residues long: Ribosomal RNA large subunit methyltransferase H (156 aa).

Residues Leu-73, Gly-104, and Leu-123–Leu-128 contribute to the S-adenosyl-L-methionine site.

The protein belongs to the RNA methyltransferase RlmH family. Homodimer.

It is found in the cytoplasm. The catalysed reaction is pseudouridine(1915) in 23S rRNA + S-adenosyl-L-methionine = N(3)-methylpseudouridine(1915) in 23S rRNA + S-adenosyl-L-homocysteine + H(+). Functionally, specifically methylates the pseudouridine at position 1915 (m3Psi1915) in 23S rRNA. This chain is Ribosomal RNA large subunit methyltransferase H, found in Hahella chejuensis (strain KCTC 2396).